Reading from the N-terminus, the 425-residue chain is MVKVYIENYGCARNRADGEIMAALLYLSGHEIVESPEESEIVVVNSCAVKDPTERKIARRIRELLDNGKKVIVTGCLPHVNPDVIDERVSAILGVKSIDRIVQAVEYAMRGEKLISVPDWKKRNLDKLDFPRLSPRNVYFILPIAEGCLNACTYCATRLARGVLKSYSPEKIIGWVKWAIKQGYKEIWLSAEDTGCYGFDIGTNLAKLIDEITAIEGEFRIRVGMMNPNHVLKFLDELIDAYKDEKVYKFLHLPVQSGDNEILRKMGRMYTVEEFEEIVKAFRREFPELNLHTDIIVGFPGESEEAFQRSVELIKRIRPDKVNVSRYSPRPGTIAAKWKQLPGWVVKERSRLLHRIRLQISYEINRKYIGKKVKVLIHGEGKKGNVDAVTMNYKHIILPEGRKGEFREARVKNAASTYLLGEIIT.

The MTTase N-terminal domain occupies 2-110; sequence VKVYIENYGC…IVQAVEYAMR (109 aa). 6 residues coordinate [4Fe-4S] cluster: Cys-11, Cys-47, Cys-76, Cys-148, Cys-152, and Cys-155. Positions 134–363 constitute a Radical SAM core domain; it reads SPRNVYFILP…HRIRLQISYE (230 aa). The region spanning 366–425 is the TRAM domain; it reads RKYIGKKVKVLIHGEGKKGNVDAVTMNYKHIILPEGRKGEFREARVKNAASTYLLGEIIT.

It belongs to the methylthiotransferase family. CDKAL1 subfamily. [4Fe-4S] cluster serves as cofactor.

It carries out the reaction N(6)-L-threonylcarbamoyladenosine(37) in tRNA + (sulfur carrier)-SH + AH2 + 2 S-adenosyl-L-methionine = 2-methylsulfanyl-N(6)-L-threonylcarbamoyladenosine(37) in tRNA + (sulfur carrier)-H + 5'-deoxyadenosine + L-methionine + A + S-adenosyl-L-homocysteine + 2 H(+). In terms of biological role, catalyzes the methylthiolation of N6-threonylcarbamoyladenosine (t(6)A), leading to the formation of 2-methylthio-N6-threonylcarbamoyladenosine (ms(2)t(6)A) at position 37 in tRNAs that read codons beginning with adenine. The protein is Probable threonylcarbamoyladenosine tRNA methylthiotransferase of Pyrococcus horikoshii (strain ATCC 700860 / DSM 12428 / JCM 9974 / NBRC 100139 / OT-3).